Reading from the N-terminus, the 291-residue chain is tRNA N(3)-cytidine methyltransferase METTL8, mitochondrial (291 aa).

Residues 1–21 constitute a mitochondrion transit peptide; the sequence is MNMIWRNSISCLRLGKVPHRY. K80 is covalently cross-linked (Glycyl lysine isopeptide (Lys-Gly) (interchain with G-Cter in SUMO)). W89 and Y93 together coordinate S-adenosyl-L-methionine. The interval 141-187 is disordered; it reads FSRMHCPTVPDEKNHYEKSSGSSEGQSKTESDFSNLDSEKHKKGPME. Over residues 159–168 the composition is skewed to low complexity; it reads SSGSSEGQSK. S-adenosyl-L-methionine-binding residues include G204, D230, and D256.

It belongs to the methyltransferase superfamily. METL family. As to quaternary structure, interacts with EP300.

It is found in the mitochondrion. The enzyme catalyses cytidine(32) in tRNA(Ser) + S-adenosyl-L-methionine = N(3)-methylcytidine(32) in tRNA(Ser) + S-adenosyl-L-homocysteine + H(+). It carries out the reaction cytidine(32) in tRNA(Thr) + S-adenosyl-L-methionine = N(3)-methylcytidine(32) in tRNA(Thr) + S-adenosyl-L-homocysteine + H(+). It catalyses the reaction a cytidine in mRNA + S-adenosyl-L-methionine = an N(3)-methylcytidine in mRNA + S-adenosyl-L-homocysteine + H(+). Mitochondrial S-adenosyl-L-methionine-dependent methyltransferase that mediates N(3)-methylcytidine modification of residue 32 of the tRNA anticodon loop of mitochondrial tRNA(Ser)(UCN) and tRNA(Thr). N(3)-methylcytidine methylation modification regulates mitochondrial translation efficiency and is required for activity of the respiratory chain. N(3)-methylcytidine methylation of mitochondrial tRNA(Ser)(UCN) requires the formation of N(6)-dimethylallyladenosine(37) (i6A37) by TRIT1 as prerequisite. May also mediate N(3)-methylcytidine modification of mRNAs. The existence of N(3)-methylcytidine modification on mRNAs is however unclear, and additional evidences are required to confirm the role of the N(3)-methylcytidine-specific mRNA methyltransferase activity of METTL8 in vivo. The sequence is that of tRNA N(3)-cytidine methyltransferase METTL8, mitochondrial from Homo sapiens (Human).